The following is a 120-amino-acid chain: Large ribosomal subunit protein bL12 (120 aa).

Belongs to the bacterial ribosomal protein bL12 family. As to quaternary structure, homodimer. Part of the ribosomal stalk of the 50S ribosomal subunit. Forms a multimeric L10(L12)X complex, where L10 forms an elongated spine to which 2 to 4 L12 dimers bind in a sequential fashion. Binds GTP-bound translation factors.

Forms part of the ribosomal stalk which helps the ribosome interact with GTP-bound translation factors. Is thus essential for accurate translation. This chain is Large ribosomal subunit protein bL12, found in Lactobacillus gasseri (strain ATCC 33323 / DSM 20243 / BCRC 14619 / CIP 102991 / JCM 1131 / KCTC 3163 / NCIMB 11718 / NCTC 13722 / AM63).